Here is a 756-residue protein sequence, read N- to C-terminus: Xylosyl- and glucuronyltransferase LARGE1 (756 aa).

The Cytoplasmic segment spans residues methionine 1 to lysine 10. A helical; Signal-anchor for type II membrane protein membrane pass occupies residues phenylalanine 11–alanine 31. At glycine 32–serine 756 the chain is on the lumenal side. Disordered regions lie at residues serine 43–serine 64 and glutamine 82–threonine 108. Over residues proline 44 to serine 58 the composition is skewed to polar residues. The stretch at arginine 53–arginine 95 forms a coiled coil. Residues asparagine 97, asparagine 122, and asparagine 148 are each glycosylated (N-linked (GlcNAc...) asparagine). Positions isoleucine 138–arginine 413 are xylosyltransferase activity. Aspartate 242 and aspartate 244 together coordinate Mn(2+). Asparagine 272 is a glycosylation site (N-linked (GlcNAc...) asparagine). The tract at residues arginine 414 to serine 756 is glucuronyltransferase activity. Aspartate 563 and aspartate 565 together coordinate Mn(2+).

In the C-terminal section; belongs to the glycosyltransferase 49 family. It in the N-terminal section; belongs to the glycosyltransferase 8 family. Interacts with DAG1 (via the N-terminal domain of alpha-DAG1); the interaction increases binding of DAG1 to laminin. Interacts with B4GAT1. The cofactor is Mn(2+). In terms of tissue distribution, ubiquitous. Highest expression in heart, diaphragm and brain, where it is especially found in cerebral cortex, hippocampus, and trigeminal ganglion.

It is found in the golgi apparatus membrane. It catalyses the reaction 3-O-[beta-D-GlcA-(1-&gt;3)-beta-D-Xyl-(1-&gt;4)-Rib-ol-P-Rib-ol-P-3-beta-D-GalNAc-(1-&gt;3)-beta-D-GlcNAc-(1-&gt;4)-(O-6-P-alpha-D-Man)]-Thr-[protein] + UDP-alpha-D-xylose = 3-O-[alpha-D-Xyl-(1-&gt;3)-beta-D-GlcA-(1-&gt;4)-beta-D-Xyl-(1-&gt;4)-Rib-ol-P-Rib-ol-P-3-beta-D-GalNAc-(1-&gt;3)-beta-D-GlcNAc-(1-&gt;4)-(O-6-P-alpha-D-Man)]-Thr-[protein] + UDP + H(+). It carries out the reaction 3-O-{(1-&gt;[3)-alpha-D-Xyl-(1-&gt;3)-beta-D-GlcA-(1-&gt;](n)-4)-beta-D-Xyl-(1-&gt;4)-Rib-ol-P-Rib-ol-P-3-beta-D-GalNAc-(1-&gt;3)-beta-D-GlcNAc-(1-&gt;4)-O-6-P-alpha-D-Man}-L-Thr-[protein] + UDP-alpha-D-glucuronate = 3-O-{beta-D-GlcA-(1-&gt;[3)-alpha-D-Xyl-(1-&gt;3)-beta-D-GlcA-(1-&gt;](n)-4)-beta-D-Xyl-(1-&gt;4)-Rib-ol-P-Rib-ol-P-3-beta-D-GalNAc-(1-&gt;3)-beta-D-GlcNAc-(1-&gt;4)-O-6-P-alpha-D-Man}-L-Thr-[protein] + UDP + H(+). The catalysed reaction is 3-O-{beta-D-GlcA-(1-&gt;[3)-alpha-D-Xyl-(1-&gt;3)-beta-D-GlcA-(1-&gt;](n)-4)-beta-D-Xyl-(1-&gt;4)-Rib-ol-P-Rib-ol-P-3-beta-D-GalNAc-(1-&gt;3)-beta-D-GlcNAc-(1-&gt;4)-O-6-P-alpha-D-Man}-L-Thr-[protein] + UDP-alpha-D-xylose = 3-O-{(1-&gt;[3)-alpha-D-Xyl-(1-&gt;3)-beta-D-GlcA-(1-&gt;](n+1)-4)-beta-D-Xyl-(1-&gt;4)-Rib-ol-P-Rib-ol-P-3-beta-D-GalNAc-(1-&gt;3)-beta-D-GlcNAc-(1-&gt;4)-O-6-P-alpha-D-Man}-L-Thr-[protein] + UDP + H(+). The protein operates within protein modification; protein glycosylation. In terms of biological role, bifunctional glycosyltransferase with both alpha-1,3-xylosyltransferase and beta-1,3-glucuronyltransferase activities involved in the maturation of alpha-dystroglycan (DAG1) by glycosylation leading to DAG1 binding to laminin G-like domain-containing extracellular proteins with high affinity. Elongates the glucuronyl-beta-1,4-xylose-beta disaccharide primer structure initiated by B4GAT1 by adding repeating units [-3-Xylose-alpha-1,3-GlcA-beta-1-] to produce a heteropolysaccharide. Requires the phosphorylation of core M3 (O-mannosyl trisaccharide) by POMK to elongate the glucuronyl-beta-1,4-xylose-beta disaccharide primer. Plays a key role in skeletal muscle function and regeneration. The sequence is that of Xylosyl- and glucuronyltransferase LARGE1 from Mus musculus (Mouse).